A 671-amino-acid chain; its full sequence is DNA ligase (671 aa).

Residues 32–36 (DAEYD), 81–82 (SL), and Glu113 each bind NAD(+). Lys115 (N6-AMP-lysine intermediate) is an active-site residue. The NAD(+) site is built by Arg136, Glu173, Lys290, and Lys314. Positions 408, 411, 426, and 432 each coordinate Zn(2+). Residues 593–671 (EIDSPFAGKT…EAEMIRLLGA (79 aa)) enclose the BRCT domain.

It belongs to the NAD-dependent DNA ligase family. LigA subfamily. It depends on Mg(2+) as a cofactor. Requires Mn(2+) as cofactor.

The enzyme catalyses NAD(+) + (deoxyribonucleotide)n-3'-hydroxyl + 5'-phospho-(deoxyribonucleotide)m = (deoxyribonucleotide)n+m + AMP + beta-nicotinamide D-nucleotide.. DNA ligase that catalyzes the formation of phosphodiester linkages between 5'-phosphoryl and 3'-hydroxyl groups in double-stranded DNA using NAD as a coenzyme and as the energy source for the reaction. It is essential for DNA replication and repair of damaged DNA. This is DNA ligase from Salmonella choleraesuis (strain SC-B67).